We begin with the raw amino-acid sequence, 434 residues long: Enolase (434 aa).

Gln-163 is a (2R)-2-phosphoglycerate binding site. The active-site Proton donor is Glu-205. Asp-242, Glu-291, and Asp-318 together coordinate Mg(2+). (2R)-2-phosphoglycerate contacts are provided by Lys-343, Arg-372, Ser-373, and Lys-394. Lys-343 functions as the Proton acceptor in the catalytic mechanism.

This sequence belongs to the enolase family. The cofactor is Mg(2+).

It localises to the cytoplasm. The protein resides in the secreted. It is found in the cell surface. It catalyses the reaction (2R)-2-phosphoglycerate = phosphoenolpyruvate + H2O. The protein operates within carbohydrate degradation; glycolysis; pyruvate from D-glyceraldehyde 3-phosphate: step 4/5. In terms of biological role, catalyzes the reversible conversion of 2-phosphoglycerate (2-PG) into phosphoenolpyruvate (PEP). It is essential for the degradation of carbohydrates via glycolysis. This Streptococcus pneumoniae serotype 19F (strain G54) protein is Enolase.